The sequence spans 560 residues: MRRGKSIVLSLLLWHFPVWAACPDWSPARANDEIARLQQQLAQWNDSYWQQGVSAVDDSVYDQLSAQLVQWQRCFGGDTGAELAPPVSGSLPHPVPHTGVRKLADKQAVQQWMRKRSDLWVQPKVDGVAVTLVYRDGRLVSAISRGNGLKGEDWTQKVRLIPAVPQSTKGALANSTLQGEIFLLHDNHIQRQMGGMNARSKVAGMMMRQNNTSSLQSLSVFIWAWPDGPATMPERLRQLSGAGFGFAQQYSQPVKSADDVERVRTAWWTTGLPFVTDGVVVRTGKEPEARHWMPGQGDWLVAWKYPPVAKVAEVTGVQFAVGKSGKISVVASLAPVMLDDKRVKRVNVGSVRRWEEWDIAPGDHILVSLAGQGIPRIDKVVWRSTQRDKPAPPGNRYNALTCFYATEVCQEQFIARLVWLGSKEALEVDGMGEAGWRVLHQAHRFEHIFSWLALTQEQLQATPGFSKEKSKQLWHQFNLVRHRPFIRWVMAMGIPLTQGALKANGDRSWGQLLARTAEYWQQLPTTGEGRARRVIQWRDNPEIRALGNWLAARHINGFSP.

Lys-124 serves as the catalytic N6-AMP-lysine intermediate.

This sequence belongs to the NAD-dependent DNA ligase family. LigB subfamily.

The enzyme catalyses NAD(+) + (deoxyribonucleotide)n-3'-hydroxyl + 5'-phospho-(deoxyribonucleotide)m = (deoxyribonucleotide)n+m + AMP + beta-nicotinamide D-nucleotide.. Catalyzes the formation of phosphodiester linkages between 5'-phosphoryl and 3'-hydroxyl groups in double-stranded DNA using NAD as a coenzyme and as the energy source for the reaction. This chain is DNA ligase B, found in Citrobacter koseri (strain ATCC BAA-895 / CDC 4225-83 / SGSC4696).